A 172-amino-acid polypeptide reads, in one-letter code: Shikimate kinase (172 aa).

14–19 (GAGKST) provides a ligand contact to ATP. Ser18 lines the Mg(2+) pocket. 3 residues coordinate substrate: Asp36, Arg60, and Gly82. Position 120 (Arg120) interacts with ATP. Arg139 is a binding site for substrate. ATP is bound at residue Gln156.

The protein belongs to the shikimate kinase family. Monomer. It depends on Mg(2+) as a cofactor.

It is found in the cytoplasm. It catalyses the reaction shikimate + ATP = 3-phosphoshikimate + ADP + H(+). It participates in metabolic intermediate biosynthesis; chorismate biosynthesis; chorismate from D-erythrose 4-phosphate and phosphoenolpyruvate: step 5/7. Catalyzes the specific phosphorylation of the 3-hydroxyl group of shikimic acid using ATP as a cosubstrate. The polypeptide is Shikimate kinase (Vibrio vulnificus (strain CMCP6)).